We begin with the raw amino-acid sequence, 328 residues long: uncharacterized protein (328 aa).

Residues 10–55 (KMGFGHAMLLKMGWKGKGLGVEEDGRTEIIVNKKKQDKVGVGASIS) enclose the G-patch domain. Positions 97–291 (EKITFKRTIK…KKSFSVSKTR (195 aa)) are disordered. The segment covering 101 to 110 (FKRTIKKNSK) has biased composition (basic residues). Positions 116–126 (SDSDSDSDSES) are enriched in acidic residues. Low complexity-rich tracts occupy residues 141–158 (DSDS…SSSS) and 210–240 (SSSS…SSSE). Residues 248 to 257 (KNKNKNKNKK) show a composition bias toward basic residues.

This is an uncharacterized protein from Dictyostelium discoideum (Social amoeba).